A 501-amino-acid polypeptide reads, in one-letter code: Lysine--tRNA ligase (501 aa).

Mg(2+)-binding residues include glutamate 411 and glutamate 418.

It belongs to the class-II aminoacyl-tRNA synthetase family. In terms of assembly, homodimer. It depends on Mg(2+) as a cofactor.

The protein localises to the cytoplasm. It carries out the reaction tRNA(Lys) + L-lysine + ATP = L-lysyl-tRNA(Lys) + AMP + diphosphate. This chain is Lysine--tRNA ligase, found in Shewanella woodyi (strain ATCC 51908 / MS32).